A 402-amino-acid polypeptide reads, in one-letter code: NADH-quinone oxidoreductase subunit D (402 aa).

This sequence belongs to the complex I 49 kDa subunit family. As to quaternary structure, NDH-1 is composed of 14 different subunits. Subunits NuoB, C, D, E, F, and G constitute the peripheral sector of the complex.

The protein localises to the cell inner membrane. The catalysed reaction is a quinone + NADH + 5 H(+)(in) = a quinol + NAD(+) + 4 H(+)(out). Functionally, NDH-1 shuttles electrons from NADH, via FMN and iron-sulfur (Fe-S) centers, to quinones in the respiratory chain. The immediate electron acceptor for the enzyme in this species is believed to be ubiquinone. Couples the redox reaction to proton translocation (for every two electrons transferred, four hydrogen ions are translocated across the cytoplasmic membrane), and thus conserves the redox energy in a proton gradient. The sequence is that of NADH-quinone oxidoreductase subunit D from Rhodopseudomonas palustris (strain TIE-1).